Consider the following 65-residue polypeptide: DNA-directed RNA polymerase subunit Rpo10 (65 aa).

Cys7, Cys10, Cys44, and Cys45 together coordinate Zn(2+).

This sequence belongs to the archaeal Rpo10/eukaryotic RPB10 RNA polymerase subunit family. In terms of assembly, part of the RNA polymerase complex. Requires Zn(2+) as cofactor.

It localises to the cytoplasm. The enzyme catalyses RNA(n) + a ribonucleoside 5'-triphosphate = RNA(n+1) + diphosphate. Functionally, DNA-dependent RNA polymerase (RNAP) catalyzes the transcription of DNA into RNA using the four ribonucleoside triphosphates as substrates. This Pyrococcus furiosus (strain ATCC 43587 / DSM 3638 / JCM 8422 / Vc1) protein is DNA-directed RNA polymerase subunit Rpo10.